The chain runs to 441 residues: Protein translocase subunit SecY (441 aa).

The next 10 membrane-spanning stretches (helical) occupy residues 18-38, 78-98, 124-144, 157-177, 180-200, 215-235, 272-292, 318-338, 382-402, and 403-423; these read ILFT…PSPG, AVGV…TVVI, IALA…GGLL, IFTL…VMWM, LITE…GIAA, GVVF…VVFV, VIPV…TQLI, LVYI…YVSI, IYLG…AGGT, and VQNL…GLDT.

It belongs to the SecY/SEC61-alpha family. As to quaternary structure, component of the Sec protein translocase complex. Heterotrimer consisting of SecY, SecE and SecG subunits. The heterotrimers can form oligomers, although 1 heterotrimer is thought to be able to translocate proteins. Interacts with the ribosome. Interacts with SecDF, and other proteins may be involved. Interacts with SecA.

It is found in the cell membrane. The central subunit of the protein translocation channel SecYEG. Consists of two halves formed by TMs 1-5 and 6-10. These two domains form a lateral gate at the front which open onto the bilayer between TMs 2 and 7, and are clamped together by SecE at the back. The channel is closed by both a pore ring composed of hydrophobic SecY resides and a short helix (helix 2A) on the extracellular side of the membrane which forms a plug. The plug probably moves laterally to allow the channel to open. The ring and the pore may move independently. The protein is Protein translocase subunit SecY of Mycobacterium bovis (strain ATCC BAA-935 / AF2122/97).